We begin with the raw amino-acid sequence, 493 residues long: Acetylcholine receptor subunit beta-type unc-29 (493 aa).

An N-terminal signal peptide occupies residues 1–26 (MRTNRLSWILVLSVVIFLVIINTINA). N-linked (GlcNAc...) asparagine glycosylation is found at asparagine 25 and asparagine 50. Topologically, residues 27–232 (SDDEERLMVD…QVRIRRKTLF (206 aa)) are extracellular. Residues cysteine 155 and cysteine 169 are joined by a disulfide bond. Helical transmembrane passes span 233–254 (YTVV…VFFL), 262–280 (ITLT…LLVS), and 296–317 (YLLL…IINV). At 318–445 (YFRGPRTHRM…WKYVAMIIDR (128 aa)) the chain is on the cytoplasmic side. A helical membrane pass occupies residues 446–466 (LLLYVFFGITVGGTCGILFSA).

It belongs to the ligand-gated ion channel (TC 1.A.9) family. Acetylcholine receptor (TC 1.A.9.1) subfamily. In terms of assembly, interacts with lev-1. Component of nicotinic acetylcholine receptor composed of 2 non-alpha subunits lev-1 and unc-29, and 3 alpha subunits unc-38, unc-63 and lev-8. Interacts with oig-4. Interacts with crld-1.

The protein resides in the postsynaptic cell membrane. It localises to the cell membrane. Non-alpha subunit of nicotinic acetylcholine receptor (nAChR). Involved in nAChR sensitivity to nicotine and levasimole. The sequence is that of Acetylcholine receptor subunit beta-type unc-29 from Caenorhabditis elegans.